Reading from the N-terminus, the 338-residue chain is Glyceraldehyde-3-phosphate dehydrogenase, cytosolic (338 aa).

NAD(+) is bound by residues 14–15 (RI), Asp-36, and Arg-83. Residues 154 to 156 (SCT), Thr-185, 214 to 215 (TG), and Arg-237 contribute to the D-glyceraldehyde 3-phosphate site. Residue Cys-155 is the Nucleophile of the active site. An NAD(+)-binding site is contributed by Asn-319.

The protein belongs to the glyceraldehyde-3-phosphate dehydrogenase family. In terms of assembly, homotetramer.

The protein resides in the cytoplasm. The enzyme catalyses D-glyceraldehyde 3-phosphate + phosphate + NAD(+) = (2R)-3-phospho-glyceroyl phosphate + NADH + H(+). It functions in the pathway carbohydrate degradation; glycolysis; pyruvate from D-glyceraldehyde 3-phosphate: step 1/5. Key enzyme in glycolysis that catalyzes the first step of the pathway by converting D-glyceraldehyde 3-phosphate (G3P) into 3-phospho-D-glyceroyl phosphate. Essential for the maintenance of cellular ATP levels and carbohydrate metabolism. This chain is Glyceraldehyde-3-phosphate dehydrogenase, cytosolic (GAPC1), found in Pisum sativum (Garden pea).